The chain runs to 431 residues: TDP-daunosamine transferase DnrS (431 aa).

A signal peptide spans 1–23 (MKVLVTAFAMDAHFNGVVPLAWA).

This sequence belongs to the glycosyltransferase 28 family.

The catalysed reaction is dTDP-beta-L-daunosamine + epsilon-rhodomycinone = rhodomycin D + dTDP + H(+). It participates in antibiotic biosynthesis; daunorubicin biosynthesis. It functions in the pathway antibiotic biosynthesis; carminomycin biosynthesis. Its function is as follows. Involved in the biosynthesis of the anthracyclines carminomycin and daunorubicin (daunomycin) which are aromatic polyketide antibiotics that exhibit high cytotoxicity and are widely applied in the chemotherapy of a variety of cancers. Catalyzes the addition of the TDP activated glycoside, L-daunosamine-TDP (2,3,6-trideoxy-3-aminohexose-TDP) at position C-7 of epsilon-rhodomycinone to yield rhodomycin D. Glycosylation is a prerequisite for biological activity of anthracyclines and requires DnrQ which seems to act as an activator. This Streptomyces peucetius protein is TDP-daunosamine transferase DnrS (dnrS).